The chain runs to 510 residues: MIWHVQNENFILDSTRIFMKAFHLLLFQGSFIFPECILIFGLILLLMIDLTSDQKDRPWFYFISSTSLVISITALLFRWREEPIISFSGNFQTNNFNEIFQFLILLCSTLCIPLSVEYIECTEMAITEFLLFVLTATLGGMFLCGANDLITIFVAPECFSLCSYLLSGYTKRDLRSNEATMKYLLMGGASSSILVHGFSWLYGSSGGEIELQEIVNGLINTQMYNSPGISIALISITVGLGFKLSPAPFHQWTPDVYEGSPTPVVAFLSVTSKVAASASATRILDIPFYFSSNEWHLLLEILAILSMILGNLLAITQTSMKRMLAYSSIGQIGYVIIGIIVGDSNDGYASMITYMLFYISMNLGTFACIVLFGLRTGTDNIRDYAGLYTKDPFLALSLALCLLSLGGLPPLAGFFGKLYLFWCGWQAGLYFLVSIGLLTSVLSIYYYLKIVKLLMTGRNQEITPYVRNYRRSPLRSNNSIELSMTVCVIASTIPGISMNPILAIAQDTLF.

12 helical membrane-spanning segments follow: residues 31–51, 59–79, 99–119, 124–144, 149–169, 183–203, 229–249, 295–315, 323–343, 354–374, 395–415, and 418–438; these read FIFPECILIFGLILLLMIDLT, WFYFISSTSLVISITALLFRW, IFQFLILLCSTLCIPLSVEYI, MAITEFLLFVLTATLGGMFLC, LITIFVAPECFSLCSYLLSGY, YLLMGGASSSILVHGFSWLYG, ISIALISITVGLGFKLSPAPF, WHLLLEILAILSMILGNLLAI, MLAYSSIGQIGYVIIGIIVGD, YMLFYISMNLGTFACIVLFGL, ALSLALCLLSLGGLPPLAGFF, and LYLFWCGWQAGLYFLVSIGLL.

It belongs to the complex I subunit 2 family. In terms of assembly, NDH is composed of at least 16 different subunits, 5 of which are encoded in the nucleus.

Its subcellular location is the plastid. It localises to the chloroplast thylakoid membrane. It carries out the reaction a plastoquinone + NADH + (n+1) H(+)(in) = a plastoquinol + NAD(+) + n H(+)(out). The catalysed reaction is a plastoquinone + NADPH + (n+1) H(+)(in) = a plastoquinol + NADP(+) + n H(+)(out). Functionally, NDH shuttles electrons from NAD(P)H:plastoquinone, via FMN and iron-sulfur (Fe-S) centers, to quinones in the photosynthetic chain and possibly in a chloroplast respiratory chain. The immediate electron acceptor for the enzyme in this species is believed to be plastoquinone. Couples the redox reaction to proton translocation, and thus conserves the redox energy in a proton gradient. In Oryza nivara (Indian wild rice), this protein is NAD(P)H-quinone oxidoreductase subunit 2 A, chloroplastic.